Consider the following 467-residue polypeptide: 3-isopropylmalate dehydratase large subunit (467 aa).

Cys347, Cys407, and Cys410 together coordinate [4Fe-4S] cluster.

Belongs to the aconitase/IPM isomerase family. LeuC type 1 subfamily. In terms of assembly, heterodimer of LeuC and LeuD. It depends on [4Fe-4S] cluster as a cofactor.

It catalyses the reaction (2R,3S)-3-isopropylmalate = (2S)-2-isopropylmalate. It participates in amino-acid biosynthesis; L-leucine biosynthesis; L-leucine from 3-methyl-2-oxobutanoate: step 2/4. Catalyzes the isomerization between 2-isopropylmalate and 3-isopropylmalate, via the formation of 2-isopropylmaleate. The protein is 3-isopropylmalate dehydratase large subunit of Crocosphaera subtropica (strain ATCC 51142 / BH68) (Cyanothece sp. (strain ATCC 51142)).